The sequence spans 285 residues: Pantothenate synthetase (285 aa).

30-37 (MGNLHDGH) provides a ligand contact to ATP. H37 acts as the Proton donor in catalysis. Q61 is a (R)-pantoate binding site. Q61 contacts beta-alanine. 149–152 (GEKD) serves as a coordination point for ATP. Q155 contacts (R)-pantoate. ATP is bound by residues I178 and 186–189 (FSSR).

This sequence belongs to the pantothenate synthetase family. As to quaternary structure, homodimer.

It localises to the cytoplasm. The catalysed reaction is (R)-pantoate + beta-alanine + ATP = (R)-pantothenate + AMP + diphosphate + H(+). It participates in cofactor biosynthesis; (R)-pantothenate biosynthesis; (R)-pantothenate from (R)-pantoate and beta-alanine: step 1/1. Functionally, catalyzes the condensation of pantoate with beta-alanine in an ATP-dependent reaction via a pantoyl-adenylate intermediate. The protein is Pantothenate synthetase of Buchnera aphidicola subsp. Schizaphis graminum (strain Sg).